The sequence spans 488 residues: MAGPVRCLPPVVEATSIPHAPPVISKEVSEIVNNMLSVAIPAAAAASAQDQRFASQFRCGPEFTTMKAQALEACRKILAENDQGGYTIPAKGLYPYQWNWDSALVSLGLAEMEEERAWEELDRLMSAQWEDGMVPHIVFHKPSSTYFPGPEIWGSPDKPRNTTGITQPPVAAISVRRLLEEAKDKALALAMARKLFPKLLAWHRWFYRARDPEGTGLVATIHPWETGMDNSPAWDEALARVPIDDIPPYVRRDLGHVDAKMRPQKAEYDRYLTLLYRFRALDYDEAKLYYETPFRVTDLCTNCILHKANEDLLWLAGATGACTDESEIRGWTARANVAFDTLFDVEAGLYRCKDQLTGQFLPAATSAGFLPLFAGVASGEKASAVARTLGRWLDDVAYGIPSCDPRDPQFEALRYWRGPVWLIVNWMVSEGLKRYGYGELAQRVERDSYELVKNGGIFEYYCPLTGMGAGGGCFSWTAAMCLAWLFKT.

Substrate-binding positions include Y94, 98 to 101 (WNWD), Y146, Q167, and G227. The active-site Proton donor is D229. Residues R262 and 415 to 416 (YW) contribute to the substrate site. E459 serves as the catalytic Proton acceptor.

The protein belongs to the glycosyl hydrolase 63 family.

It catalyses the reaction (2R)-2-O-(alpha-D-mannosyl)-glycerate + H2O = D-mannose + (R)-glycerate. The catalysed reaction is (2R)-2-O-(alpha-D-glucopyranosyl)-glycerate + H2O = (R)-glycerate + D-glucose. With respect to regulation, activity is not dependent on divalent cations, but it is enhanced by Mn(2+). Its function is as follows. Catalyzes the hydrolysis of alpha-D-mannosyl-glycerate (MG) to D-glycerate and D-mannose. Can also hydrolyze alpha-D-glucopyranosyl-glycerate (GG)with lower efficiency. This Selaginella moellendorffii (Spikemoss) protein is Mannosylglycerate hydrolase MGH1.